A 511-amino-acid chain; its full sequence is L-arabinose isomerase (511 aa).

The Mn(2+) site is built by glutamate 316, glutamate 343, histidine 360, and histidine 459.

The protein belongs to the arabinose isomerase family. Mn(2+) is required as a cofactor.

It catalyses the reaction beta-L-arabinopyranose = L-ribulose. Its pathway is carbohydrate degradation; L-arabinose degradation via L-ribulose; D-xylulose 5-phosphate from L-arabinose (bacterial route): step 1/3. Its function is as follows. Catalyzes the conversion of L-arabinose to L-ribulose. This Arthrobacter sp. (strain FB24) protein is L-arabinose isomerase.